Here is a 435-residue protein sequence, read N- to C-terminus: MSQKPHLNLIVIGHVDHGKSTLVGRLLMDRGFLDEKTIKEAEEAAKKLGKESEKYAFLLDRLKEERERGVTINLTFMRFETKKFFFTIIDAPGHRDFVKNMITGASQADAAILVVSAKKGEYEAGMSAEGQTREHIILAKTMGINQVIVAVNKMDLTDPPYDEKRFKEIVDQVGKFMKSFGFDMNKVKFVPVVAPTGENITQRSENMKWYTGPTLEEYLDQLEIPPKPVDKPLRIPIQEVYSISGVGVVPVGRVETGVLKVGDKVVFMPVGKVGEVRSIETHHTKIEKAEPGDNIGFNVRGVEKKDIKRGDVAGSLNVPPTVADEFTAQIIVIWHPTAVSVGYTPVVHIHTASVACRITELTSKIDPKTGKEVEKNPQFLKSGDSAIVKMKPIKELVVEKFREFPALGRFAMRDMGKTVGVGVVIDVKPKKVEIK.

The region spanning 4-229 (KPHLNLIVIG…DQLEIPPKPV (226 aa)) is the tr-type G domain. The interval 13–20 (GHVDHGKS) is G1. 13-20 (GHVDHGKS) contacts GTP. Serine 20 is a Mg(2+) binding site. Residues 69–73 (GVTIN) are G2. A G3 region spans residues 90–93 (DAPG). Residues 90 to 94 (DAPGH) and 152 to 155 (NKMD) contribute to the GTP site. The interval 152–155 (NKMD) is G4. Residues 193–195 (VAP) form a G5 region.

Belongs to the TRAFAC class translation factor GTPase superfamily. Classic translation factor GTPase family. EF-Tu/EF-1A subfamily.

It localises to the cytoplasm. The catalysed reaction is GTP + H2O = GDP + phosphate + H(+). In terms of biological role, GTP hydrolase that promotes the GTP-dependent binding of aminoacyl-tRNA to the A-site of ribosomes during protein biosynthesis. In Sulfurisphaera tokodaii (strain DSM 16993 / JCM 10545 / NBRC 100140 / 7) (Sulfolobus tokodaii), this protein is Elongation factor 1-alpha.